The primary structure comprises 172 residues: Large ribosomal subunit protein uL10 (172 aa).

Belongs to the universal ribosomal protein uL10 family. In terms of assembly, part of the ribosomal stalk of the 50S ribosomal subunit. The N-terminus interacts with L11 and the large rRNA to form the base of the stalk. The C-terminus forms an elongated spine to which L12 dimers bind in a sequential fashion forming a multimeric L10(L12)X complex.

Forms part of the ribosomal stalk, playing a central role in the interaction of the ribosome with GTP-bound translation factors. The polypeptide is Large ribosomal subunit protein uL10 (rplJ) (Liberibacter africanus (Citrus greening disease)).